The following is a 237-amino-acid chain: Ribonuclease PH (237 aa).

Residues R86 and 124 to 126 (GTR) contribute to the phosphate site.

Belongs to the RNase PH family. As to quaternary structure, homohexameric ring arranged as a trimer of dimers.

The catalysed reaction is tRNA(n+1) + phosphate = tRNA(n) + a ribonucleoside 5'-diphosphate. In terms of biological role, phosphorolytic 3'-5' exoribonuclease that plays an important role in tRNA 3'-end maturation. Removes nucleotide residues following the 3'-CCA terminus of tRNAs; can also add nucleotides to the ends of RNA molecules by using nucleoside diphosphates as substrates, but this may not be physiologically important. Probably plays a role in initiation of 16S rRNA degradation (leading to ribosome degradation) during starvation. In Methylocella silvestris (strain DSM 15510 / CIP 108128 / LMG 27833 / NCIMB 13906 / BL2), this protein is Ribonuclease PH.